A 259-amino-acid chain; its full sequence is MFLALDIGNTNITVGLFAMKDKKVLPEPLKVWIMSTVKERTFDEYATLLMNMLFYDGFDAKQLSNFAVASVVPSLNAVFEELIKKYFGEKTFFVNSKNCGGLVFAAGNSKETGADRIANVVAAYSVYGDSCIVIDFGTATTFDCINSEGIYIGGAIAPGPSISARLLNLKTEQLPRVEVKKPLKSIGLTTVECMQSGLYFGYTGLVKELIARIKNEMKIKHIIATGGLAGLMFDEIEEIEIILPYLTLSGVRIVWEKVI.

Position 6-13 (6-13 (DIGNTNIT)) interacts with ATP. 113–116 (GADR) contacts substrate. Asp115 functions as the Proton acceptor in the catalytic mechanism. Asp135 is a K(+) binding site. Thr138 lines the ATP pocket. Thr190 is a substrate binding site.

It belongs to the type III pantothenate kinase family. In terms of assembly, homodimer. NH4(+) is required as a cofactor. The cofactor is K(+).

The protein resides in the cytoplasm. It carries out the reaction (R)-pantothenate + ATP = (R)-4'-phosphopantothenate + ADP + H(+). It functions in the pathway cofactor biosynthesis; coenzyme A biosynthesis; CoA from (R)-pantothenate: step 1/5. Catalyzes the phosphorylation of pantothenate (Pan), the first step in CoA biosynthesis. This chain is Type III pantothenate kinase, found in Endomicrobium trichonymphae.